Here is a 345-residue protein sequence, read N- to C-terminus: MIETDALSGGTPRRLVTQQPLSSQEEALERALRPKALDDYVGQKKAREQLEIFIEAAKKRGEALDHVLLFGPPGLGKTTLAHIISRELGVNLRQTSGPVLERAGDLAALLTNLEPHDVLFIDEIHRLSPVVEEILYPALEDYQIDIMIGEGPAARSVKIDLPPFTLVGATTRAGMLTNPLRDRFGIVARLEFYTPEELTRIVRRSAGLLEVQLGEEGAFEVARRSRGTPRIANRLLRRVRDFAEVRADGVVTAAVADAALSMLDVDPAGLDVMDRKLLAAVLEKFGGGPVGLDNVAAAIGESTDTIEDVIEPYLIQQGYLQRTPRGRMATALAWTHFGFVPPERV.

The segment at 1 to 22 is disordered; it reads MIETDALSGGTPRRLVTQQPLS. The segment at 4–193 is large ATPase domain (RuvB-L); sequence TDALSGGTPR…FGIVARLEFY (190 aa). ATP is bound by residues L32, R33, G74, K77, T78, T79, 140–142, R183, Y193, and R230; that span reads EDY. T78 is a binding site for Mg(2+). A small ATPAse domain (RuvB-S) region spans residues 194–264; that stretch reads TPEELTRIVR…VADAALSMLD (71 aa). The tract at residues 267–345 is head domain (RuvB-H); that stretch reads PAGLDVMDRK…HFGFVPPERV (79 aa). R322 and R327 together coordinate DNA.

The protein belongs to the RuvB family. In terms of assembly, homohexamer. Forms an RuvA(8)-RuvB(12)-Holliday junction (HJ) complex. HJ DNA is sandwiched between 2 RuvA tetramers; dsDNA enters through RuvA and exits via RuvB. An RuvB hexamer assembles on each DNA strand where it exits the tetramer. Each RuvB hexamer is contacted by two RuvA subunits (via domain III) on 2 adjacent RuvB subunits; this complex drives branch migration. In the full resolvosome a probable DNA-RuvA(4)-RuvB(12)-RuvC(2) complex forms which resolves the HJ.

It localises to the cytoplasm. The catalysed reaction is ATP + H2O = ADP + phosphate + H(+). Functionally, the RuvA-RuvB-RuvC complex processes Holliday junction (HJ) DNA during genetic recombination and DNA repair, while the RuvA-RuvB complex plays an important role in the rescue of blocked DNA replication forks via replication fork reversal (RFR). RuvA specifically binds to HJ cruciform DNA, conferring on it an open structure. The RuvB hexamer acts as an ATP-dependent pump, pulling dsDNA into and through the RuvAB complex. RuvB forms 2 homohexamers on either side of HJ DNA bound by 1 or 2 RuvA tetramers; 4 subunits per hexamer contact DNA at a time. Coordinated motions by a converter formed by DNA-disengaged RuvB subunits stimulates ATP hydrolysis and nucleotide exchange. Immobilization of the converter enables RuvB to convert the ATP-contained energy into a lever motion, pulling 2 nucleotides of DNA out of the RuvA tetramer per ATP hydrolyzed, thus driving DNA branch migration. The RuvB motors rotate together with the DNA substrate, which together with the progressing nucleotide cycle form the mechanistic basis for DNA recombination by continuous HJ branch migration. Branch migration allows RuvC to scan DNA until it finds its consensus sequence, where it cleaves and resolves cruciform DNA. In Laribacter hongkongensis (strain HLHK9), this protein is Holliday junction branch migration complex subunit RuvB.